Reading from the N-terminus, the 73-residue chain is UPF0235 protein HY04AAS1_1378 (73 aa).

This sequence belongs to the UPF0235 family.

The protein is UPF0235 protein HY04AAS1_1378 of Hydrogenobaculum sp. (strain Y04AAS1).